A 176-amino-acid polypeptide reads, in one-letter code: ATP synthase subunit delta (176 aa).

The protein belongs to the ATPase delta chain family. F-type ATPases have 2 components, F(1) - the catalytic core - and F(0) - the membrane proton channel. F(1) has five subunits: alpha(3), beta(3), gamma(1), delta(1), epsilon(1). F(0) has three main subunits: a(1), b(2) and c(10-14). The alpha and beta chains form an alternating ring which encloses part of the gamma chain. F(1) is attached to F(0) by a central stalk formed by the gamma and epsilon chains, while a peripheral stalk is formed by the delta and b chains.

It is found in the cell inner membrane. Functionally, f(1)F(0) ATP synthase produces ATP from ADP in the presence of a proton or sodium gradient. F-type ATPases consist of two structural domains, F(1) containing the extramembraneous catalytic core and F(0) containing the membrane proton channel, linked together by a central stalk and a peripheral stalk. During catalysis, ATP synthesis in the catalytic domain of F(1) is coupled via a rotary mechanism of the central stalk subunits to proton translocation. This protein is part of the stalk that links CF(0) to CF(1). It either transmits conformational changes from CF(0) to CF(1) or is implicated in proton conduction. In Polaromonas sp. (strain JS666 / ATCC BAA-500), this protein is ATP synthase subunit delta.